A 137-amino-acid polypeptide reads, in one-letter code: Large ribosomal subunit protein uL16 (137 aa).

This sequence belongs to the universal ribosomal protein uL16 family. As to quaternary structure, part of the 50S ribosomal subunit.

In terms of biological role, binds 23S rRNA and is also seen to make contacts with the A and possibly P site tRNAs. The polypeptide is Large ribosomal subunit protein uL16 (Psychrobacter arcticus (strain DSM 17307 / VKM B-2377 / 273-4)).